Here is a 195-residue protein sequence, read N- to C-terminus: MELPIRLVVGLGNPGDKYTSTRHNIGSDWLDRLADAQRVSFALDIRFRGLCARIVQSDTDIWLLKPQTYMNASGMSVGAMCRYYKITPEQILVVHDELDLQPGIIKLKSGGGTGGHNGLKSIVADLSTQVFWRLRIGVGHPGDRNQVVDYVLHLPRREEAALIDEAIDHSIQVWPLIARGNFAAAMQQLHTRQEN.

Y18 is a binding site for tRNA. H23 (proton acceptor) is an active-site residue. TRNA contacts are provided by Y69, N71, and N117.

This sequence belongs to the PTH family. In terms of assembly, monomer.

It is found in the cytoplasm. The catalysed reaction is an N-acyl-L-alpha-aminoacyl-tRNA + H2O = an N-acyl-L-amino acid + a tRNA + H(+). In terms of biological role, hydrolyzes ribosome-free peptidyl-tRNAs (with 1 or more amino acids incorporated), which drop off the ribosome during protein synthesis, or as a result of ribosome stalling. Functionally, catalyzes the release of premature peptidyl moieties from peptidyl-tRNA molecules trapped in stalled 50S ribosomal subunits, and thus maintains levels of free tRNAs and 50S ribosomes. This chain is Peptidyl-tRNA hydrolase, found in Nitrosomonas eutropha (strain DSM 101675 / C91 / Nm57).